Consider the following 549-residue polypeptide: Dihydroxy-acid dehydratase (549 aa).

Residue D78 coordinates Mg(2+). C119 is a [2Fe-2S] cluster binding site. The Mg(2+) site is built by D120 and K121. N6-carboxylysine is present on K121. C191 contributes to the [2Fe-2S] cluster binding site. E441 lines the Mg(2+) pocket. S466 acts as the Proton acceptor in catalysis.

This sequence belongs to the IlvD/Edd family. As to quaternary structure, homodimer. It depends on [2Fe-2S] cluster as a cofactor. Mg(2+) serves as cofactor.

It carries out the reaction (2R)-2,3-dihydroxy-3-methylbutanoate = 3-methyl-2-oxobutanoate + H2O. The enzyme catalyses (2R,3R)-2,3-dihydroxy-3-methylpentanoate = (S)-3-methyl-2-oxopentanoate + H2O. It functions in the pathway amino-acid biosynthesis; L-isoleucine biosynthesis; L-isoleucine from 2-oxobutanoate: step 3/4. Its pathway is amino-acid biosynthesis; L-valine biosynthesis; L-valine from pyruvate: step 3/4. Functions in the biosynthesis of branched-chain amino acids. Catalyzes the dehydration of (2R,3R)-2,3-dihydroxy-3-methylpentanoate (2,3-dihydroxy-3-methylvalerate) into 2-oxo-3-methylpentanoate (2-oxo-3-methylvalerate) and of (2R)-2,3-dihydroxy-3-methylbutanoate (2,3-dihydroxyisovalerate) into 2-oxo-3-methylbutanoate (2-oxoisovalerate), the penultimate precursor to L-isoleucine and L-valine, respectively. This is Dihydroxy-acid dehydratase from Methanosphaera stadtmanae (strain ATCC 43021 / DSM 3091 / JCM 11832 / MCB-3).